The following is a 562-amino-acid chain: Zinc finger protein 579 (562 aa).

Residues 1-11 show a composition bias toward pro residues; the sequence is MDPQPPPPAQG. The interval 1 to 43 is disordered; that stretch reads MDPQPPPPAQGSPPHRGRGRGRGRGRGRGRGRGRGGAGAPRAP. Residues 15–33 are compositionally biased toward basic residues; it reads HRGRGRGRGRGRGRGRGRG. C2H2-type zinc fingers lie at residues 44–66, 72–94, and 100–123; these read LPCP…RLSH, HACP…LRGH, and LRCA…AQEH. Arg-92 is modified (omega-N-methylarginine). The segment at 139–203 is disordered; it reads TAEPSWGPQD…SESEEAEAGA (65 aa). Phosphoserine occurs at positions 194 and 196. 2 C2H2-type zinc fingers span residues 270–292 and 298–320; these read HQCS…RLVH and FVCP…RRVH. The disordered stretch occupies residues 327–379; it reads APLPAAGKKDDKASGARNSAKGPEGGEGAECGGASEGGEGQNGGDAAPARPPA. Over residues 349–369 the composition is skewed to gly residues; it reads PEGGEGAECGGASEGGEGQNG. 3 C2H2-type zinc fingers span residues 384-406, 412-434, and 441-463; these read FWCP…GVTH, FQCV…AQVH, and HPCP…QRCH. The tract at residues 477–562 is disordered; it reads QAQAPTSPPP…HLRGLGGLAS (86 aa). Pro residues-rich tracts occupy residues 482–491 and 512–525; these read TSPPPPPPPL and PSPG…PAPP. Ser-483 bears the Phosphoserine mark.

This sequence belongs to the krueppel C2H2-type zinc-finger protein family.

The protein resides in the nucleus. May be involved in transcriptional regulation. The polypeptide is Zinc finger protein 579 (ZNF579) (Homo sapiens (Human)).